Consider the following 1108-residue polypeptide: Isoleucine--tRNA ligase (1108 aa).

A 'HIGH' region motif is present at residues 53-63 (PFANGLPHYGH). A 'KMSKS' region motif is present at residues 654 to 658 (KLSKR). ATP is bound at residue K657.

This sequence belongs to the class-I aminoacyl-tRNA synthetase family. IleS type 2 subfamily. In terms of assembly, monomer. Zn(2+) is required as a cofactor.

It localises to the cytoplasm. It catalyses the reaction tRNA(Ile) + L-isoleucine + ATP = L-isoleucyl-tRNA(Ile) + AMP + diphosphate. Its function is as follows. Catalyzes the attachment of isoleucine to tRNA(Ile). As IleRS can inadvertently accommodate and process structurally similar amino acids such as valine, to avoid such errors it has two additional distinct tRNA(Ile)-dependent editing activities. One activity is designated as 'pretransfer' editing and involves the hydrolysis of activated Val-AMP. The other activity is designated 'posttransfer' editing and involves deacylation of mischarged Val-tRNA(Ile). The protein is Isoleucine--tRNA ligase of Rickettsia bellii (strain OSU 85-389).